We begin with the raw amino-acid sequence, 546 residues long: CTP synthase (546 aa).

Positions 1–266 are amidoligase domain; the sequence is MTTRYIFVTG…DDLVVKRFGL (266 aa). Ser14 provides a ligand contact to CTP. Ser14 provides a ligand contact to UTP. Residues 15–20 and Asp72 each bind ATP; that span reads SLGKGI. Asp72 and Glu140 together coordinate Mg(2+). Residues 147-149, 187-192, and Lys223 each bind CTP; these read DIE and KTKPTQ. UTP-binding positions include 187–192 and Lys223; that span reads KTKPTQ. 239–241 provides a ligand contact to ATP; the sequence is KDV. The 252-residue stretch at 291-542 folds into the Glutamine amidotransferase type-1 domain; the sequence is VIGMVGKYIE…VAAASAHQKR (252 aa). Gly352 contacts L-glutamine. Cys379 functions as the Nucleophile; for glutamine hydrolysis in the catalytic mechanism. L-glutamine-binding positions include 380-383, Glu403, and Arg470; that span reads LGMQ. Catalysis depends on residues His515 and Glu517.

This sequence belongs to the CTP synthase family. Homotetramer.

It carries out the reaction UTP + L-glutamine + ATP + H2O = CTP + L-glutamate + ADP + phosphate + 2 H(+). The catalysed reaction is L-glutamine + H2O = L-glutamate + NH4(+). It catalyses the reaction UTP + NH4(+) + ATP = CTP + ADP + phosphate + 2 H(+). Its pathway is pyrimidine metabolism; CTP biosynthesis via de novo pathway; CTP from UDP: step 2/2. Allosterically activated by GTP, when glutamine is the substrate; GTP has no effect on the reaction when ammonia is the substrate. The allosteric effector GTP functions by stabilizing the protein conformation that binds the tetrahedral intermediate(s) formed during glutamine hydrolysis. Inhibited by the product CTP, via allosteric rather than competitive inhibition. In terms of biological role, catalyzes the ATP-dependent amination of UTP to CTP with either L-glutamine or ammonia as the source of nitrogen. Regulates intracellular CTP levels through interactions with the four ribonucleotide triphosphates. The protein is CTP synthase of Shewanella sp. (strain MR-7).